Here is a 184-residue protein sequence, read N- to C-terminus: Protein DESIGUAL 3 (184 aa).

An N-terminal signal peptide occupies residues 1 to 24 (MESELGFLVSVVIICADITATVLG). Basic residues predominate over residues 34–45 (APHHHHQQHSRH). Residues 34–53 (APHHHHQQHSRHSGSGCRRS) are disordered. The next 3 helical transmembrane spans lie at 62–82 (GVAAMVLLFIVHVLANVLGGC), 99–119 (ILAVAFLVLSWIFFVVSYSTL), and 140–160 (FFLIGGIFCLGHGVVTSAYYV). N-linked (GlcNAc...) asparagine glycosylation is present at asparagine 180.

This sequence belongs to the DESIGUAL family. In terms of tissue distribution, mainly expressed in roots, inflorescences and developing leaves, and, at low levels, in mature leaves.

Its subcellular location is the endoplasmic reticulum membrane. Functionally, involved, partially redundantly with VCC/DEAL1 and DEAL2, to ensure bilateral symmetry development and early leaf margin patterning, probably via the regulation of auxin and CUC2 distribution. The protein is Protein DESIGUAL 3 of Arabidopsis thaliana (Mouse-ear cress).